Consider the following 310-residue polypeptide: 2-dehydro-3-deoxygluconokinase (310 aa).

Residues glycine 29–asparagine 33, tyrosine 89, tyrosine 103–arginine 105, and arginine 171 contribute to the substrate site. ATP-binding positions include asparagine 169–arginine 171, lysine 229–alanine 234, and alanine 262–aspartate 265. Aspartate 265 serves as a coordination point for substrate. The Proton acceptor role is filled by aspartate 265.

This sequence belongs to the carbohydrate kinase PfkB family.

It catalyses the reaction 2-dehydro-3-deoxy-D-gluconate + ATP = 2-dehydro-3-deoxy-6-phospho-D-gluconate + ADP + H(+). The protein operates within carbohydrate acid metabolism; 2-dehydro-3-deoxy-D-gluconate degradation; D-glyceraldehyde 3-phosphate and pyruvate from 2-dehydro-3-deoxy-D-gluconate: step 1/2. In terms of biological role, catalyzes the phosphorylation of 2-keto-3-deoxygluconate (KDG) to produce 2-keto-3-deoxy-6-phosphogluconate (KDPG). The chain is 2-dehydro-3-deoxygluconokinase from Dickeya dadantii (strain 3937) (Erwinia chrysanthemi (strain 3937)).